We begin with the raw amino-acid sequence, 736 residues long: Sulfate transporter (736 aa).

The tract at residues 1 to 28 (MSSESKEPHVLSPKDSFEGNDRYSPPSR) is disordered. A phosphoserine mark is found at serine 12 and serine 16. Helical transmembrane passes span 114–134 (VMSGLIVGILLVPQSIAYSLL) and 139–159 (PIYGLYTSFFASLIYFLLGTS). N-linked (GlcNAc...) asparagine glycans are attached at residues asparagine 201 and asparagine 207. The next 6 membrane-spanning stretches (helical) occupy residues 229 to 249 (FLAGIYQVAMGFFQVGFVSVY), 257 to 277 (GFVTGASFTILTSQAKYLLGL), 380 to 400 (LIPSVAVDAIAISIIGFAITV), 422 to 442 (AIGFCNIIPSFFHCFTTSAAL), 457 to 477 (LSGVMTALVLLLVLLVIAPLF), and 526 to 546 (LISTELGLLIGVCFSMFCVIL). The region spanning 570–721 (AYKNLQARPG…YSVYEAMAFA (152 aa)) is the STAS domain.

This sequence belongs to the SLC26A/SulP transporter (TC 2.A.53) family. N-glycosylated.

It localises to the cell membrane. The protein resides in the apical cell membrane. The enzyme catalyses oxalate(in) + sulfate(out) = oxalate(out) + sulfate(in). It catalyses the reaction sulfate(out) + 2 chloride(in) = sulfate(in) + 2 chloride(out). The catalysed reaction is oxalate(out) + 2 chloride(in) = oxalate(in) + 2 chloride(out). It carries out the reaction bromide(in) + chloride(out) = bromide(out) + chloride(in). The enzyme catalyses nitrate(in) + chloride(out) = nitrate(out) + chloride(in). It catalyses the reaction iodide(in) + chloride(out) = iodide(out) + chloride(in). Its function is as follows. Sulfate transporter which mediates sulfate uptake into chondrocytes in order to maintain adequate sulfation of proteoglycans which is needed for cartilage development. Mediates electroneutral anion exchange of sulfate ions for oxalate ions, sulfate and oxalate ions for chloride and/or hydroxyl ions and chloride ions for bromide, iodide and nitrate ions. The coupling of sulfate transport to both hydroxyl and chloride ions likely serves to ensure transport at both acidic pH when most sulfate uptake is mediated by sulfate-hydroxide exchange and alkaline pH when most sulfate uptake is mediated by sulfate-chloride exchange. Essential for chondrocyte proliferation, differentiation and cell size expansion. The chain is Sulfate transporter (SLC26A2) from Equus caballus (Horse).